The primary structure comprises 373 residues: MSKRQLVKQSRRWVIKIGSALLTNNGRGLDREEMAVWVKQMAALSKRGYEVVLVSSGAVAAGMTRLGWAERPKALHELQAAAAVGQSSLIQAYEQEFQKYSIKTAQILLDHDDLSNRQRYLNARSTLRTLTKLGVIPIVNENDTVVTDEIRFGDNDTLGALVANLIEADTLCILTDQKAMFDSDPRQNALAKMLIERSAFDPGLDAMAGDGGALGRGGMISKVRAARLAARSGANTIVVGGKVFDVIPRVASGEILGTLLYSESQPIAARKRWLAGNMQPRGRLTLDDGAVKVLREQGKSLLPVGVRAVEGYFTRGELVLCEDTAGREIARGLVNYSSDETNKIKGASSSRIDSLLGYKDYDELIHRDNLVLV.

K16 contacts ATP. Positions 56, 143, and 155 each coordinate substrate. 175-176 contributes to the ATP binding site; that stretch reads TD. A PUA domain is found at 281–359; it reads RGRLTLDDGA…SRIDSLLGYK (79 aa).

It belongs to the glutamate 5-kinase family.

The protein localises to the cytoplasm. It carries out the reaction L-glutamate + ATP = L-glutamyl 5-phosphate + ADP. The protein operates within amino-acid biosynthesis; L-proline biosynthesis; L-glutamate 5-semialdehyde from L-glutamate: step 1/2. In terms of biological role, catalyzes the transfer of a phosphate group to glutamate to form L-glutamate 5-phosphate. This is Glutamate 5-kinase from Saccharophagus degradans (strain 2-40 / ATCC 43961 / DSM 17024).